Consider the following 86-residue polypeptide: Putative regulatory protein OB1501 (86 aa).

Belongs to the RemA family.

The polypeptide is Putative regulatory protein OB1501 (Oceanobacillus iheyensis (strain DSM 14371 / CIP 107618 / JCM 11309 / KCTC 3954 / HTE831)).